Here is a 223-residue protein sequence, read N- to C-terminus: Sigma non-opioid intracellular receptor 1 (223 aa).

The Lumenal segment spans residues 1–9 (MPWAVGRRW). The targeting to endoplasmic reticulum-associated lipid droplets stretch occupies residues 2–8 (PWAVGRR). A helical membrane pass occupies residues 10–30 (AWITLFLTIVAVLIQAVWLWL). The Cytoplasmic segment spans residues 31–223 (GTQSFVFQRE…LTTYLFGQDP (193 aa)). Residues 99-106 (SLSEYVLL) are important for ligand-binding. A C-terminal hydrophobic region region spans residues 177-223 (VIPSTLAFALSDTIFSTQDFLTLFYTLRAYARGLRLELTTYLFGQDP).

This sequence belongs to the ERG2 family. Homotrimer. Interacts with KCNA2; cocaine consumption leads to increased interaction. Forms a ternary complex with ANK2 and ITPR3. The complex is disrupted by agonists. Interacts with KCNA4. Interacts with RNF112 in an oxidative stress-regulated manner. In terms of tissue distribution, expressed in ependymocytes and neurons throughout the CNS from the olfactory bulb to the spinal cord. Expressed by progenitor, mature and satellite oligodendrocytes and by Schwann cells (at protein level). Expressed in liver, intestine, kidney, brain, lung and heart. Expressed by retinal cells.

It localises to the nucleus inner membrane. It is found in the nucleus outer membrane. The protein localises to the nucleus envelope. Its subcellular location is the cytoplasmic vesicle. The protein resides in the endoplasmic reticulum membrane. It localises to the membrane. It is found in the lipid droplet. The protein localises to the cell junction. Its subcellular location is the cell membrane. The protein resides in the cell projection. It localises to the growth cone. It is found in the postsynaptic density membrane. In terms of biological role, functions in lipid transport from the endoplasmic reticulum and is involved in a wide array of cellular functions probably through regulation of the biogenesis of lipid microdomains at the plasma membrane. Involved in the regulation of different receptors it plays a role in BDNF signaling and EGF signaling. Also regulates ion channels like the potassium channel and could modulate neurotransmitter release. Plays a role in calcium signaling through modulation together with ANK2 of the ITP3R-dependent calcium efflux at the endoplasmic reticulum. Plays a role in several other cell functions including proliferation, survival and death. Originally identified for its ability to bind various psychoactive drugs it is involved in learning processes, memory and mood alteration. Necessary for proper mitochondrial axonal transport in motor neurons, in particular the retrograde movement of mitochondria. Plays a role in protecting cells against oxidative stress-induced cell death via its interaction with RNF112. The sequence is that of Sigma non-opioid intracellular receptor 1 (Sigmar1) from Rattus norvegicus (Rat).